The primary structure comprises 714 residues: Polyribonucleotide nucleotidyltransferase (714 aa).

Residues aspartate 488 and aspartate 494 each coordinate Mg(2+). Positions 555-614 (PRIEVMNIPTDKIRDVIGSGGKVIREIVEKTGAKINIEDDGTVKIASSNGKEIEAAKKWI) constitute a KH domain. Residues 624–692 (GEIYEGTVVK…ERGKVRLSMK (69 aa)) form the S1 motif domain.

Belongs to the polyribonucleotide nucleotidyltransferase family. It depends on Mg(2+) as a cofactor.

It is found in the cytoplasm. The catalysed reaction is RNA(n+1) + phosphate = RNA(n) + a ribonucleoside 5'-diphosphate. Its function is as follows. Involved in mRNA degradation. Catalyzes the phosphorolysis of single-stranded polyribonucleotides processively in the 3'- to 5'-direction. The protein is Polyribonucleotide nucleotidyltransferase of Brucella ovis (strain ATCC 25840 / 63/290 / NCTC 10512).